Reading from the N-terminus, the 732-residue chain is MHRIERTFAGRPLVIETGRMAKQAAGSAVVQFGETMVLAAVTVSENQSPLPFFPLTVEYKEKTYAAGKIPGGFIKREGRPHDHEILAARIIDRSIRPLFPEGFKNEVQVFIYVISADQENDADVLALVAASFALNASKIPFLGPIAGVRVGRVQGHWVLNPTFQQLGFSDLELVVAGSKDSIVMVEGGSLEVSEEDVLESLRLSHDGIRELIGMQEELLAKVRVPKMSWVKAEAPEGITTRVKELASGRIREALNQKDKHTRIEAVERTKKELAEGLLVEFPDNAKDIGNLLGDVEYHELRSQVLDTQLRVDGRKKDEVRAISIDTSVLPRAHGSALFTRGQTQALVAATLGTAKDAQRLDSIKEPGEVTRSFMLHYNFPPFSTGEVRPMRGTSRREIGHGNLAERALQGVLPDFADFPYTIRIVSDVLESNGSSSMASVCGGSLSLFDAGVPLKAAVAGVAMGLIKEGERYAILTDILGTEDHLGDMDFKVAGTKDGITSIQMDIKIEGLDIKIMEEALSQAKAGRLHILGEMDKALAAPREDLSKYAPRIVTVQIPVDKIGELIGPKGKNIRGIQDETGAELSVEDDGTVTIAAVGGDSMERAKQMVMAITAEPVVGETYEGTVKTVTAFGAFVEIMPGNEALLHVSEMRWERVEKPEDVVKKGDRVTVKLVDRDERGRLRLSMKALLPKPEGMPDEPPQSERPRRDDGERSGGDRGGRGGRNGGGRDRR.

The Mg(2+) site is built by Asp-483 and Asp-489. A KH domain is found at 550–609; sequence PRIVTVQIPVDKIGELIGPKGKNIRGIQDETGAELSVEDDGTVTIAAVGGDSMERAKQMV. Positions 619-687 constitute an S1 motif domain; sequence GETYEGTVKT…ERGRLRLSMK (69 aa). Residues 684–732 are disordered; the sequence is LSMKALLPKPEGMPDEPPQSERPRRDDGERSGGDRGGRGGRNGGGRDRR. The span at 702 to 720 shows a compositional bias: basic and acidic residues; that stretch reads QSERPRRDDGERSGGDRGG.

The protein belongs to the polyribonucleotide nucleotidyltransferase family. It depends on Mg(2+) as a cofactor.

The protein resides in the cytoplasm. The catalysed reaction is RNA(n+1) + phosphate = RNA(n) + a ribonucleoside 5'-diphosphate. Functionally, involved in mRNA degradation. Catalyzes the phosphorolysis of single-stranded polyribonucleotides processively in the 3'- to 5'-direction. The sequence is that of Polyribonucleotide nucleotidyltransferase from Gemmatimonas aurantiaca (strain DSM 14586 / JCM 11422 / NBRC 100505 / T-27).